The sequence spans 166 residues: Small ribosomal subunit protein uS5 (166 aa).

Residues 11-74 (LEDRVVAINR…DAARKNLIEV (64 aa)) form the S5 DRBM domain.

This sequence belongs to the universal ribosomal protein uS5 family. As to quaternary structure, part of the 30S ribosomal subunit. Contacts proteins S4 and S8.

In terms of biological role, with S4 and S12 plays an important role in translational accuracy. Its function is as follows. Located at the back of the 30S subunit body where it stabilizes the conformation of the head with respect to the body. The protein is Small ribosomal subunit protein uS5 of Ligilactobacillus salivarius (strain UCC118) (Lactobacillus salivarius).